The chain runs to 248 residues: Histone H1, gonadal (248 aa).

Disordered regions lie at residues 1–46 and 115–248; these read PGSP…PPVL and AVAK…KARK. Positions 9–39 are enriched in basic residues; the sequence is ASPRKSPRKSPKKSPRKASASPRRKAKRARA. An H15 domain is found at 41-115; it reads THPPVLEMVQ…GASGRFRVGA (75 aa). Positions 118–248 are enriched in basic residues; the sequence is KPKKAKKTSA…KRRSPKKARK (131 aa).

It belongs to the histone H1/H5 family. Sperm.

It is found in the nucleus. It localises to the chromosome. Functionally, histones H1 are necessary for the condensation of nucleosome chains into higher-order structures. The chain is Histone H1, gonadal from Parechinus angulosus (Angulate sea urchin).